Reading from the N-terminus, the 256-residue chain is MPAKKRDHYYNKAKQMGYRSRASFKLQFINKKHHIIKKGDTVVDLGAAPGGWLQVAKELNGGGKVIGVDLQRIEPIEGVETIKGDMTSPETQARIFEIVDEVDTVICDAAPNLSGNWALDHARSIDLATVALDVATKLLKKGGNFVVKVFQGDLYENYVKEVGKRFSYATTYKSQASRQQSAEIYVIGKGFLTTSLRKGDVVDVTIDAMGKTGDGIAHVDDFVVFVKGGSVGDKLKIKITDVKPSFAFADIVEKEK.

S-adenosyl-L-methionine is bound by residues Gly-50, Trp-52, Asp-69, Asp-85, and Asp-108. The Proton acceptor role is filled by Lys-148. Residues 195-253 enclose the TRAM domain; sequence SLRKGDVVDVTIDAMGKTGDGIAHVDDFVVFVKGGSVGDKLKIKITDVKPSFAFADIVE.

This sequence belongs to the class I-like SAM-binding methyltransferase superfamily. RNA methyltransferase RlmE family.

It is found in the cytoplasm. It catalyses the reaction uridine(2552) in 23S rRNA + S-adenosyl-L-methionine = 2'-O-methyluridine(2552) in 23S rRNA + S-adenosyl-L-homocysteine + H(+). Its function is as follows. Specifically methylates the uridine in position 2552 of 23S rRNA at the 2'-O position of the ribose in the fully assembled 50S ribosomal subunit. This chain is Ribosomal RNA large subunit methyltransferase E, found in Methanocella arvoryzae (strain DSM 22066 / NBRC 105507 / MRE50).